The chain runs to 184 residues: Leucine-rich repeat-containing protein 20 (184 aa).

5 LRR repeats span residues Q51–T72, Q75–L96, H98–P120, A121–A141, and A145–L167. S175 carries the phosphoserine modification.

In Homo sapiens (Human), this protein is Leucine-rich repeat-containing protein 20 (LRRC20).